A 192-amino-acid chain; its full sequence is MDLLFDEFRAAHVPVEEMATHYIPEAARQIGAAWDSDRIGFAQVTIAISRLQELLHALQTLVTADSVGCANGATVLLIVPPGEQHTLGALIVAMELRRRGVSVRIVFAPGLSDLSRLMATTRFDAALITVGSMDRVEICAKLVKTLSSLTKGRMRVAIGGAIVSQRAEALARTGADLVTNDLSLVISEFSLV.

Positions 72–192 constitute a B12-binding domain; the sequence is GATVLLIVPP…SLVISEFSLV (121 aa).

This is an uncharacterized protein from Rhodobacter capsulatus (Rhodopseudomonas capsulata).